Reading from the N-terminus, the 425-residue chain is Adenylosuccinate synthetase (425 aa).

GTP-binding positions include 12–18 (GDEGKGK) and 40–42 (GHT). Asp13 serves as the catalytic Proton acceptor. Mg(2+) contacts are provided by Asp13 and Gly40. IMP contacts are provided by residues 13–16 (DEGK), 38–41 (NAGH), Thr129, Arg143, Asn221, Thr236, and Arg300. His41 acts as the Proton donor in catalysis. 296–302 (VTTGRKR) is a substrate binding site. GTP contacts are provided by residues Arg302, 328–330 (KLD), and 410–412 (GVG).

The protein belongs to the adenylosuccinate synthetase family. As to quaternary structure, homodimer. It depends on Mg(2+) as a cofactor.

It is found in the cytoplasm. It carries out the reaction IMP + L-aspartate + GTP = N(6)-(1,2-dicarboxyethyl)-AMP + GDP + phosphate + 2 H(+). It functions in the pathway purine metabolism; AMP biosynthesis via de novo pathway; AMP from IMP: step 1/2. Its function is as follows. Plays an important role in the de novo pathway and in the salvage pathway of purine nucleotide biosynthesis. Catalyzes the first committed step in the biosynthesis of AMP from IMP. This is Adenylosuccinate synthetase from Phaeosphaeria nodorum (strain SN15 / ATCC MYA-4574 / FGSC 10173) (Glume blotch fungus).